We begin with the raw amino-acid sequence, 505 residues long: Aspartyl/glutamyl-tRNA(Asn/Gln) amidotransferase subunit B (505 aa).

Belongs to the GatB/GatE family. GatB subfamily. In terms of assembly, heterotrimer of A, B and C subunits.

It carries out the reaction L-glutamyl-tRNA(Gln) + L-glutamine + ATP + H2O = L-glutaminyl-tRNA(Gln) + L-glutamate + ADP + phosphate + H(+). The catalysed reaction is L-aspartyl-tRNA(Asn) + L-glutamine + ATP + H2O = L-asparaginyl-tRNA(Asn) + L-glutamate + ADP + phosphate + 2 H(+). Allows the formation of correctly charged Asn-tRNA(Asn) or Gln-tRNA(Gln) through the transamidation of misacylated Asp-tRNA(Asn) or Glu-tRNA(Gln) in organisms which lack either or both of asparaginyl-tRNA or glutaminyl-tRNA synthetases. The reaction takes place in the presence of glutamine and ATP through an activated phospho-Asp-tRNA(Asn) or phospho-Glu-tRNA(Gln). The protein is Aspartyl/glutamyl-tRNA(Asn/Gln) amidotransferase subunit B of Haloarcula marismortui (strain ATCC 43049 / DSM 3752 / JCM 8966 / VKM B-1809) (Halobacterium marismortui).